We begin with the raw amino-acid sequence, 351 residues long: UPF0252 protein MJECL39 (351 aa).

2 helical membrane passes run 58–78 (FITF…VWLW) and 91–111 (IIIC…LCGV).

The protein belongs to the UPF0252 family.

Its subcellular location is the cell membrane. The polypeptide is UPF0252 protein MJECL39 (Methanocaldococcus jannaschii (strain ATCC 43067 / DSM 2661 / JAL-1 / JCM 10045 / NBRC 100440) (Methanococcus jannaschii)).